Reading from the N-terminus, the 78-residue chain is Translation initiation factor IF-1, plastid (78 aa).

Residues 1–72 (MKKQDLIDME…TKGRITYRLR (72 aa)) enclose the S1-like domain.

The protein belongs to the IF-1 family. As to quaternary structure, component of the 30S ribosomal translation pre-initiation complex which assembles on the 30S ribosome in the order IF-2 and IF-3, IF-1 and N-formylmethionyl-tRNA(fMet); mRNA recruitment can occur at any time during PIC assembly.

It localises to the plastid. In terms of biological role, one of the essential components for the initiation of protein synthesis. Stabilizes the binding of IF-2 and IF-3 on the 30S subunit to which N-formylmethionyl-tRNA(fMet) subsequently binds. Helps modulate mRNA selection, yielding the 30S pre-initiation complex (PIC). Upon addition of the 50S ribosomal subunit IF-1, IF-2 and IF-3 are released leaving the mature 70S translation initiation complex. The chain is Translation initiation factor IF-1, plastid from Aneura mirabilis (Parasitic liverwort).